The following is a 337-amino-acid chain: Vacuolar protein sorting-associated protein 26B (337 aa).

The interval serine 311–glutamate 337 is disordered.

Belongs to the VPS26 family. Component of the heterotrimeric retromer cargo-selective complex (CSC) which is believed to associate with variable sorting nexins to form functionally distinct retromer complex variants.

It localises to the cytoplasm. The protein localises to the membrane. It is found in the endosome. Its function is as follows. Acts as a component of the retromer cargo-selective complex (CSC). The CSC is believed to be the core functional component of retromer or respective retromer complex variants acting to prevent missorting of selected transmembrane cargo proteins into the lysosomal degradation pathway. Retromer mediates retrograde transport of cargo proteins from endosomes to the trans-Golgi network (TGN). This is Vacuolar protein sorting-associated protein 26B (vps26b) from Xenopus tropicalis (Western clawed frog).